The following is a 190-amino-acid chain: Elongation factor P-like protein (190 aa).

It belongs to the elongation factor P family.

The protein is Elongation factor P-like protein of Pectobacterium atrosepticum (strain SCRI 1043 / ATCC BAA-672) (Erwinia carotovora subsp. atroseptica).